The sequence spans 261 residues: UPF0246 protein azo1887 (261 aa).

This sequence belongs to the UPF0246 family.

This chain is UPF0246 protein azo1887, found in Azoarcus sp. (strain BH72).